Here is a 460-residue protein sequence, read N- to C-terminus: MHRYQKEIVRLIKLSTPVLIASVAQTGMGFVDTVMAGGVSATDMAAVAIAASVWLPSVLFGVGLLMALVPVVAQLNGSGKSKKVPFEIHQGVYLALLTSIPIMLVLYNAGFIIAAMDVEPELYEKTQGYLHAVLWAAPAFLLFQTLRSFCEGLSLTTPAMIIGFIGLAANVPLNWMFVYGELGAPALGGVGCGVATAIVYWLMFLTMTLYTFIAPKLRRVNLYENWNKPQRKEIYRLFKLGLPVALSIFFEVTLFAAVALLVSPLGSTVVAAHQVAINFSSLIFMIPMSIAVAVSIRVGHKLGEKDLDGAKVASYCGLAFGLLMACCTAILTLIFREQIAYLYSDNQEVITLAVSLMLLAAIYQCTDAVQVVAAGALRGYKDMNAIFKCTFVSYWIVGLPSGYVLGMTDWIREPMGVYGFWFGFIGGLTTSAILLTCRLLWLQRNPTRIDMEVDELQIMH.

12 consecutive transmembrane segments (helical) span residues V18–G38, V53–A73, L94–A114, T126–L146, A159–Y179, P185–L205, L242–V262, A276–I296, Y315–F335, V349–V369, F391–I411, and M415–L435.

The protein belongs to the multi antimicrobial extrusion (MATE) (TC 2.A.66.1) family.

The protein resides in the cell inner membrane. Multidrug efflux pump that functions as a Na(+)/drug antiporter. The protein is Multidrug resistance protein NorM (norM) of Aliivibrio fischeri (strain ATCC 700601 / ES114) (Vibrio fischeri).